The following is a 335-amino-acid chain: UPF0353 protein MAV335 (335 aa).

2 helical membrane passes run Trp-18–Leu-38 and Leu-67–Thr-87. The VWFA domain occupies Val-98 to Leu-295. Residues Ser-309 to Ile-329 form a helical membrane-spanning segment.

The protein belongs to the UPF0353 family.

Its subcellular location is the cell membrane. The polypeptide is UPF0353 protein MAV335 (Mycobacterium avium).